Reading from the N-terminus, the 232-residue chain is Enolase-phosphatase E1 (232 aa).

Belongs to the HAD-like hydrolase superfamily. MasA/MtnC family. As to quaternary structure, monomer. It depends on Mg(2+) as a cofactor.

It catalyses the reaction 5-methylsulfanyl-2,3-dioxopentyl phosphate + H2O = 1,2-dihydroxy-5-(methylsulfanyl)pent-1-en-3-one + phosphate. It participates in amino-acid biosynthesis; L-methionine biosynthesis via salvage pathway; L-methionine from S-methyl-5-thio-alpha-D-ribose 1-phosphate: step 3/6. The protein operates within amino-acid biosynthesis; L-methionine biosynthesis via salvage pathway; L-methionine from S-methyl-5-thio-alpha-D-ribose 1-phosphate: step 4/6. Functionally, bifunctional enzyme that catalyzes the enolization of 2,3-diketo-5-methylthiopentyl-1-phosphate (DK-MTP-1-P) into the intermediate 2-hydroxy-3-keto-5-methylthiopentenyl-1-phosphate (HK-MTPenyl-1-P), which is then dephosphorylated to form the acireductone 1,2-dihydroxy-3-keto-5-methylthiopentene (DHK-MTPene). In Sorangium cellulosum (strain So ce56) (Polyangium cellulosum (strain So ce56)), this protein is Enolase-phosphatase E1.